Reading from the N-terminus, the 335-residue chain is ETS translocation variant 2 (335 aa).

2 disordered regions span residues 94 to 138 and 201 to 220; these read DPWS…SWSH and GHQS…SDRA. Positions 205–220 are enriched in polar residues; sequence PAFTTPSKSNKQSDRA. A DNA-binding region (ETS) is located at residues 234–314; that stretch reads IQLWQFLLEL…GGRKYTYRFG (81 aa).

It belongs to the ETS family. Testis.

The protein localises to the nucleus. Functionally, binds to DNA sequences containing the consensus pentanucleotide 5'-CGGA[AT]-3'. This chain is ETS translocation variant 2 (Etv2), found in Mus musculus (Mouse).